A 328-amino-acid polypeptide reads, in one-letter code: Beta-ketoacyl-[acyl-carrier-protein] synthase III 2 (328 aa).

Catalysis depends on residues C113 and H255. An ACP-binding region spans residues 256 to 260 (QANAR). Residue N285 is part of the active site.

Belongs to the thiolase-like superfamily. FabH family. As to quaternary structure, homodimer.

The protein resides in the cytoplasm. It carries out the reaction malonyl-[ACP] + acetyl-CoA + H(+) = 3-oxobutanoyl-[ACP] + CO2 + CoA. It functions in the pathway lipid metabolism; fatty acid biosynthesis. Functionally, catalyzes the condensation reaction of fatty acid synthesis by the addition to an acyl acceptor of two carbons from malonyl-ACP. Catalyzes the first condensation reaction which initiates fatty acid synthesis and may therefore play a role in governing the total rate of fatty acid production. Possesses both acetoacetyl-ACP synthase and acetyl transacylase activities. Its substrate specificity determines the biosynthesis of branched-chain and/or straight-chain of fatty acids. This Lactiplantibacillus plantarum (strain ATCC BAA-793 / NCIMB 8826 / WCFS1) (Lactobacillus plantarum) protein is Beta-ketoacyl-[acyl-carrier-protein] synthase III 2.